Here is a 436-residue protein sequence, read N- to C-terminus: UPF0597 protein YhaM (436 aa).

This sequence belongs to the UPF0597 family.

The sequence is that of UPF0597 protein YhaM from Escherichia coli O127:H6 (strain E2348/69 / EPEC).